A 167-amino-acid chain; its full sequence is Inclusion membrane protein G (167 aa).

2 consecutive transmembrane segments (helical) span residues 33–57 and 63–88; these read VVLALSLFAVFASGSLSILSAAVLF and VLPYLLILTTALLGCVYAVIVLLRSL. The segment at 94–167 is sufficient for interaction with human 14-3-3 beta protein; it reads SCKKRSPEEI…DNSRSRSRSF (74 aa). The segment at 97-167 is disordered; it reads KRSPEEIEGA…DNSRSRSRSF (71 aa). Residues 122–135 are compositionally biased toward low complexity; sequence ESASPQASPTSSTL. The Phosphorylation-dependent binding motif signature appears at 161-166; it reads RSRSRS. Ser166 bears the Phosphoserine mark.

In terms of assembly, in infected HeLa cells colocalizes with host 14-3-3 protein (YWHAB); phosphorylation of Ser-166 is probably required. Interacts with Pkn1. Phosphorylated, possibly at more than one position, in infected HeLa cells. Phosphorylated by chlamydial kinase Pnk1.

The protein resides in the secreted. It is found in the host vacuole. Its subcellular location is the host pathogen-containing vacuole. It localises to the host pathogen-containing vacuole membrane. Functionally, inclusion membrane protein probably involved in early modification events of the chlamydial inclusion. This is Inclusion membrane protein G from Chlamydia trachomatis serovar L2 (strain ATCC VR-902B / DSM 19102 / 434/Bu).